We begin with the raw amino-acid sequence, 381 residues long: MATNIRKTHPLLKIVNHALIDLPAPSNISVWWNFGSLLGLCLIMQIITGLFLAMHYTADISMAFSSVIHISRDVNYGWLMRNIHAYGASFFFICIYLHIARGLYYGSYLNKEAWNIGVVLLFLLMATAFVGYVLPWGQMSFWGATVITNLLSAFPYIGNLLVQWIWGGFSVDNATLTRFFAFHFLLPFLILALSVIHILFLHETGANNPMGINSNTDKISFHPYFSYKDLFGFLIVITLLATLALFMPNLLGDAENFIPANPLVTPLHIQPEWYFLFAYAILRSIPNKLGGVLALLFSIFILLLVPLLHTSKLRSNIFRPLTQIFFWSLVTNAIILTWIGGQPVEQPFIMVGQIASVAYFSLFLFVIPITSWCENKFLSLN.

4 helical membrane-spanning segments follow: residues 34-54, 78-99, 114-134, and 179-199; these read FGSLLGLCLIMQIITGLFLAM, WLMRNIHAYGASFFFICIYLHI, WNIGVVLLFLLMATAFVGYVL, and FFAFHFLLPFLILALSVIHIL. His84 and His98 together coordinate heme b. Residues His183 and His197 each coordinate heme b. Position 202 (His202) interacts with a ubiquinone. 4 helical membrane passes run 227-247, 289-309, 321-341, and 348-368; these read YKDLFGFLIVITLLATLALFM, LGGVLALLFSIFILLLVPLLH, LTQIFFWSLVTNAIILTWIGG, and FIMVGQIASVAYFSLFLFVIP.

Belongs to the cytochrome b family. The cytochrome bc1 complex contains 3 respiratory subunits (MT-CYB, CYC1 and UQCRFS1), 2 core proteins (UQCRC1 and UQCRC2) and probably 6 low-molecular weight proteins. Heme b is required as a cofactor.

Its subcellular location is the mitochondrion inner membrane. In terms of biological role, component of the ubiquinol-cytochrome c reductase complex (complex III or cytochrome b-c1 complex) that is part of the mitochondrial respiratory chain. The b-c1 complex mediates electron transfer from ubiquinol to cytochrome c. Contributes to the generation of a proton gradient across the mitochondrial membrane that is then used for ATP synthesis. This chain is Cytochrome b (mt-cyb), found in Scyliorhinus canicula (Small-spotted catshark).